The following is a 398-amino-acid chain: L-methionine gamma-lyase (398 aa).

Pyridoxal 5'-phosphate contacts are provided by residues 59 to 61 and 89 to 90; these read YSR and GM. A substrate-binding site is contributed by Y114. 208–210 is a pyridoxal 5'-phosphate binding site; sequence SAT. N6-(pyridoxal phosphate)lysine is present on K211. Position 375 (R375) interacts with substrate.

This sequence belongs to the trans-sulfuration enzymes family. L-methionine gamma-lyase subfamily. As to quaternary structure, homotetramer; dimer of active dimers. Requires pyridoxal 5'-phosphate as cofactor.

It carries out the reaction L-methionine + H2O = methanethiol + 2-oxobutanoate + NH4(+). It catalyses the reaction L-homocysteine + H2O = 2-oxobutanoate + hydrogen sulfide + NH4(+) + H(+). Irreversibly inactivated by DL-propargylglycine. Catalyzes the alpha,gamma-elimination of L-methionine to produce methanethiol, 2-oxobutanoate and ammonia. Is involved in L-methionine catabolism. In fact, shows a multicatalytic function since it also catalyzes gamma-replacement of L-methionine with thiol compounds, alpha,gamma-elimination and gamma-replacement reactions of L-homocysteine and its S-substituted derivatives, O-substituted-L-homoserines and DL-selenomethionine, and, to a lesser extent, alpha,beta-elimination and beta-replacement reactions of L-cysteine, S-methyl-L-cysteine, and O-acetyl-L-serine. Also catalyzes deamination and gamma-addition reactions of L-vinylglycine. Thus, the enzyme is able to cleave C-S, C-Se, and C-O bonds of sulfur, selenium, and oxygen amino acids, respectively. The sequence is that of L-methionine gamma-lyase from Pseudomonas putida (Arthrobacter siderocapsulatus).